The primary structure comprises 300 residues: Acetyl-coenzyme A carboxylase carboxyl transferase subunit beta 2 (300 aa).

Residues valine 26 to alanine 294 enclose the CoA carboxyltransferase N-terminal domain. Cysteine 30, cysteine 33, cysteine 49, and cysteine 51 together coordinate Zn(2+). The C4-type zinc finger occupies cysteine 30–cysteine 51.

The protein belongs to the AccD/PCCB family. In terms of assembly, acetyl-CoA carboxylase is a heterohexamer composed of biotin carboxyl carrier protein (AccB), biotin carboxylase (AccC) and two subunits each of ACCase subunit alpha (AccA) and ACCase subunit beta (AccD). Zn(2+) is required as a cofactor.

The protein localises to the cytoplasm. The catalysed reaction is N(6)-carboxybiotinyl-L-lysyl-[protein] + acetyl-CoA = N(6)-biotinyl-L-lysyl-[protein] + malonyl-CoA. The protein operates within lipid metabolism; malonyl-CoA biosynthesis; malonyl-CoA from acetyl-CoA: step 1/1. Functionally, component of the acetyl coenzyme A carboxylase (ACC) complex. Biotin carboxylase (BC) catalyzes the carboxylation of biotin on its carrier protein (BCCP) and then the CO(2) group is transferred by the transcarboxylase to acetyl-CoA to form malonyl-CoA. The sequence is that of Acetyl-coenzyme A carboxylase carboxyl transferase subunit beta 2 from Roseiflexus castenholzii (strain DSM 13941 / HLO8).